Consider the following 108-residue polypeptide: Small ribosomal subunit protein uS17 (108 aa).

The protein belongs to the universal ribosomal protein uS17 family. In terms of assembly, part of the 30S ribosomal subunit.

Functionally, one of the primary rRNA binding proteins, it binds specifically to the 5'-end of 16S ribosomal RNA. This is Small ribosomal subunit protein uS17 from Methanospirillum hungatei JF-1 (strain ATCC 27890 / DSM 864 / NBRC 100397 / JF-1).